A 110-amino-acid chain; its full sequence is Large ribosomal subunit protein uL22 (110 aa).

This sequence belongs to the universal ribosomal protein uL22 family. Part of the 50S ribosomal subunit.

In terms of biological role, this protein binds specifically to 23S rRNA; its binding is stimulated by other ribosomal proteins, e.g. L4, L17, and L20. It is important during the early stages of 50S assembly. It makes multiple contacts with different domains of the 23S rRNA in the assembled 50S subunit and ribosome. Functionally, the globular domain of the protein is located near the polypeptide exit tunnel on the outside of the subunit, while an extended beta-hairpin is found that lines the wall of the exit tunnel in the center of the 70S ribosome. The polypeptide is Large ribosomal subunit protein uL22 (Syntrophotalea carbinolica (strain DSM 2380 / NBRC 103641 / GraBd1) (Pelobacter carbinolicus)).